The chain runs to 409 residues: Serine/threonine transporter SstT (409 aa).

8 helical membrane passes run 24-44 (LALG…AGLF), 48-68 (FVGA…AATI), 82-102 (IIVL…IAGM), 142-162 (AIAN…GAAL), 194-214 (LGIF…ALAG), 218-238 (LLAV…PAIV), 292-312 (IPLG…VLAM), and 319-339 (GITV…VSAC).

The protein belongs to the dicarboxylate/amino acid:cation symporter (DAACS) (TC 2.A.23) family.

The protein localises to the cell inner membrane. It carries out the reaction L-serine(in) + Na(+)(in) = L-serine(out) + Na(+)(out). It catalyses the reaction L-threonine(in) + Na(+)(in) = L-threonine(out) + Na(+)(out). In terms of biological role, involved in the import of serine and threonine into the cell, with the concomitant import of sodium (symport system). This Neisseria meningitidis serogroup B (strain ATCC BAA-335 / MC58) protein is Serine/threonine transporter SstT.